The following is a 470-amino-acid chain: ATP synthase subunit beta (470 aa).

ATP is bound at residue 155–162 (GGAGVGKT).

This sequence belongs to the ATPase alpha/beta chains family. F-type ATPases have 2 components, CF(1) - the catalytic core - and CF(0) - the membrane proton channel. CF(1) has five subunits: alpha(3), beta(3), gamma(1), delta(1), epsilon(1). CF(0) has three main subunits: a(1), b(2) and c(9-12). The alpha and beta chains form an alternating ring which encloses part of the gamma chain. CF(1) is attached to CF(0) by a central stalk formed by the gamma and epsilon chains, while a peripheral stalk is formed by the delta and b chains.

Its subcellular location is the cell membrane. It catalyses the reaction ATP + H2O + 4 H(+)(in) = ADP + phosphate + 5 H(+)(out). Functionally, produces ATP from ADP in the presence of a proton gradient across the membrane. The catalytic sites are hosted primarily by the beta subunits. This Staphylococcus haemolyticus (strain JCSC1435) protein is ATP synthase subunit beta.